The following is a 435-amino-acid chain: Histidine--tRNA ligase (435 aa).

The interval 415–435 (SVPLSAFPGDYDRPTFEDFAE) is disordered. Residues 424 to 435 (DYDRPTFEDFAE) are compositionally biased toward basic and acidic residues.

This sequence belongs to the class-II aminoacyl-tRNA synthetase family.

Its subcellular location is the cytoplasm. The enzyme catalyses tRNA(His) + L-histidine + ATP = L-histidyl-tRNA(His) + AMP + diphosphate + H(+). The chain is Histidine--tRNA ligase from Haloarcula marismortui (strain ATCC 43049 / DSM 3752 / JCM 8966 / VKM B-1809) (Halobacterium marismortui).